A 183-amino-acid chain; its full sequence is Translocon-associated protein subunit beta (183 aa).

Positions 1 to 17 (MRLLAFAVLALFAVTQA) are cleaved as a signal peptide. Residues 18–146 (EEGARLLASK…REFDRRFSPH (129 aa)) are Lumenal-facing. An N-linked (GlcNAc...) asparagine glycan is attached at Asn88. A helical membrane pass occupies residues 147 to 167 (FLDWAAFGVMTLPSIGVPLLL). Residues 168 to 183 (WYSSKRKYDTPKTKKN) lie on the Cytoplasmic side of the membrane.

It belongs to the TRAP-beta family. As to quaternary structure, heterotetramer of TRAP-alpha, TRAP-beta, TRAP-delta and TRAP-gamma. Interacts with STING1.

The protein localises to the endoplasmic reticulum membrane. TRAP proteins are part of a complex whose function is to bind calcium to the ER membrane and thereby regulate the retention of ER resident proteins. The polypeptide is Translocon-associated protein subunit beta (SSR2) (Bos taurus (Bovine)).